The sequence spans 248 residues: Malonyl-[acyl-carrier protein] O-methyltransferase 2 (248 aa).

The protein belongs to the methyltransferase superfamily.

The enzyme catalyses malonyl-[ACP] + S-adenosyl-L-methionine = malonyl-[ACP] methyl ester + S-adenosyl-L-homocysteine. Its pathway is cofactor biosynthesis; biotin biosynthesis. Converts the free carboxyl group of a malonyl-thioester to its methyl ester by transfer of a methyl group from S-adenosyl-L-methionine (SAM). It allows to synthesize pimeloyl-ACP via the fatty acid synthetic pathway. The protein is Malonyl-[acyl-carrier protein] O-methyltransferase 2 of Coxiella burnetii (strain RSA 493 / Nine Mile phase I).